Reading from the N-terminus, the 694-residue chain is Ubiquitin-like modifier-activating enzyme ATG7 (694 aa).

The short motif at 370 to 375 (GAGTLG) is the GXGXXG motif element. Cys550 functions as the Glycyl thioester intermediate in the catalytic mechanism. Positions 650-689 (ALQEKEYVAELSGLAEVQRRAEEMAAHVDWEEDDDLVDDG) are homodimerization.

The protein belongs to the ATG7 family. In terms of assembly, homodimer. Interacts with ATG8 through a thioester bond between Cys-550 and the C-terminal 'Gly-116' of ATG8 and with ATG12 through a thioester bond between Cys-550 and the C-terminal 'Gly-160' of ATG12. Also interacts with ATG3.

The protein resides in the cytoplasm. It is found in the preautophagosomal structure. Its function is as follows. E1-like activating enzyme involved in the 2 ubiquitin-like systems required for cytoplasm to vacuole transport (Cvt) and autophagy. Activates ATG12 for its conjugation with ATG5 and ATG8 for its conjugation with phosphatidylethanolamine. Both systems are needed for the ATG8 association to Cvt vesicles and autophagosomes membranes. Autophagy is essential for maintenance of amino acid levels and protein synthesis under nitrogen starvation. Required for selective autophagic degradation of the nucleus (nucleophagy) as well as for mitophagy which contributes to regulate mitochondrial quantity and quality by eliminating the mitochondria to a basal level to fulfill cellular energy requirements and preventing excess ROS production. Autophagy is required for proper vegetative growth, asexual/sexual reproduction, and full virulence. Autophagy is particularly involved in the biosynthesis of deoxynivalenol (DON), an important virulence determinant. The chain is Ubiquitin-like modifier-activating enzyme ATG7 from Gibberella zeae (strain ATCC MYA-4620 / CBS 123657 / FGSC 9075 / NRRL 31084 / PH-1) (Wheat head blight fungus).